Here is a 366-residue protein sequence, read N- to C-terminus: Probable methyltransferase-like protein 24 (366 aa).

A signal peptide spans 1 to 29 (MARERPPGRGCGVLRRCLLGAVLLFGLRL). The disordered stretch occupies residues 36-110 (AGPGSPTRSA…GRPRRKGPRW (75 aa)). Positions 44 to 63 (SAPPGPAWRPPGPHLPPAPG) are enriched in pro residues. Low complexity predominate over residues 91 to 100 (TPEPGCCAPR).

Belongs to the methyltransferase superfamily.

The protein localises to the secreted. Its function is as follows. Probable methyltransferase. This is Probable methyltransferase-like protein 24 (METTL24) from Homo sapiens (Human).